Here is a 587-residue protein sequence, read N- to C-terminus: Complement component C8 beta chain (587 aa).

The signal sequence occupies residues 1 to 31 (MNHKLKPTVGLGYCLLCAALCLLLLRDVAIA). The propeptide occupies 32 to 44 (GSGEEPSGVREAR). One can recognise a TSP type-1 1 domain in the interval 56–111 (DCVQSEWSSWTRCDVCRKKRYRYAKLVQPSQFGGEPCHVQGKEVEPCSPPSRYDCT). Intrachain disulfides connect cysteine 57–cysteine 92, cysteine 68–cysteine 102, cysteine 71–cysteine 110, cysteine 118–cysteine 129, and cysteine 123–cysteine 142. C-linked (Man) tryptophan glycans are attached at residues tryptophan 62 and tryptophan 65. The region spanning 117-159 (LCEGFLCTYTGRCVPIDLRCNGDDDCGDWSAEKGSPKVPKACK) is the LDL-receptor class A domain. Positions 134, 137, 139, 141, and 148 each coordinate Ca(2+). Positions 154–500 (VPKACKQEAQ…EYLEESSSCR (347 aa)) constitute an MACPF domain. Cysteine 158 and cysteine 196 are joined by a disulfide. A run of 4 beta stranded transmembrane segments spans residues 248 to 255 (TTVSIGFA), 258 to 265 (GVAEFGFN), 375 to 382 (EQIVLKVG), and 388 to 395 (VYVTVGLE). 5 disulfide bridges follow: cysteine 374-cysteine 399, cysteine 499-cysteine 546, cysteine 501-cysteine 517, cysteine 504-cysteine 519, and cysteine 521-cysteine 530. The 31-residue stretch at 501-531 (CAPCRNNGLAVLKGTRCECVCPSGYSGLGCE) folds into the EGF-like domain. The TSP type-1 2 domain maps to 541–587 (DGSWSCWGSWSPCRGRSKTRSRQCNNPAPSSGGIACRGLQMETTDCF). 2 C-linked (Man) tryptophan glycosylation sites follow: tryptophan 547 and tryptophan 550. Cysteine 553 and cysteine 586 form a disulfide bridge.

Belongs to the complement C6/C7/C8/C9 family. As to quaternary structure, heterotrimer of 3 chains: alpha (C8A), beta (C8B) and gamma (C8G); the alpha and gamma chains are disulfide bonded. Component of the membrane attack complex (MAC), composed of complement C5b, C6, C7, C8A, C8B, C8G and multiple copies of the pore-forming subunit C9.

The protein localises to the secreted. It is found in the target cell membrane. Its function is as follows. Component of the membrane attack complex (MAC), a multiprotein complex activated by the complement cascade, which inserts into a target cell membrane and forms a pore, leading to target cell membrane rupture and cell lysis. The MAC is initiated by proteolytic cleavage of C5 into complement C5b in response to the classical, alternative, lectin and GZMK complement pathways. The complement pathways consist in a cascade of proteins that leads to phagocytosis and breakdown of pathogens and signaling that strengthens the adaptive immune system. C8B, together with C8A and C8G, inserts into the target membrane, but does not form pores by itself. During MAC assembly, associates with C5b, C6 and C7 to form the C5b8 intermediate complex that inserts into the target membrane and traverses the bilayer increasing membrane rigidity. The polypeptide is Complement component C8 beta chain (c8b) (Oncorhynchus mykiss (Rainbow trout)).